We begin with the raw amino-acid sequence, 215 residues long: Ribosomal RNA small subunit methyltransferase G (215 aa).

Residues G77, F82, 130–131 (IE), and R146 each bind S-adenosyl-L-methionine.

The protein belongs to the methyltransferase superfamily. RNA methyltransferase RsmG family.

It is found in the cytoplasm. It carries out the reaction guanosine(527) in 16S rRNA + S-adenosyl-L-methionine = N(7)-methylguanosine(527) in 16S rRNA + S-adenosyl-L-homocysteine. Functionally, specifically methylates the N7 position of guanine in position 527 of 16S rRNA. The polypeptide is Ribosomal RNA small subunit methyltransferase G (Bartonella bacilliformis (strain ATCC 35685 / KC583 / Herrer 020/F12,63)).